Consider the following 218-residue polypeptide: Small ribosomal subunit protein uS3c (218 aa).

A KH type-2 domain is found at 47–118; the sequence is VQKNMRTSSG…KLNIAVTRIA (72 aa).

This sequence belongs to the universal ribosomal protein uS3 family. As to quaternary structure, part of the 30S ribosomal subunit.

The protein localises to the plastid. Its subcellular location is the chloroplast. The protein is Small ribosomal subunit protein uS3c (rps3) of Atropa belladonna (Belladonna).